A 397-amino-acid polypeptide reads, in one-letter code: Vacuolar protein sorting-associated protein 37A (397 aa).

Residues 1 to 22 (MSWLFPLTKSASSSAAGSPGGL) form a disordered region. Residue S18 is modified to Phosphoserine. One can recognise a VPS37 C-terminal domain in the interval 308–397 (KSTFEKKMQR…AMHSQFHAPL (90 aa)).

The protein belongs to the VPS37 family. In terms of assembly, component of the ESCRT-I complex (endosomal sorting complex required for transport I) which consists of TSG101, VPS28, a VPS37 protein (VPS37A to -D) and MVB12A or MVB12B in a 1:1:1:1 stoichiometry. Interacts with TSG101, VPS28 and HGS. Component of an ESCRT-I complex (endosomal sorting complex required for transport I) which consists of TSG101, VPS28, VPS37A and UBAP1 in a 1:1:1:1 stoichiometry. As to expression, widely expressed. Examined tissues include heart, brain, placenta, liver, skeletal muscle, kidney and pancreas. More abundant in liver. Strongly decreased or undetected in hepatomas.

It localises to the late endosome membrane. The protein localises to the nucleus. Its function is as follows. Component of the ESCRT-I complex, a regulator of vesicular trafficking process. Required for the sorting of endocytic ubiquitinated cargos into multivesicular bodies. May be involved in cell growth and differentiation. The sequence is that of Vacuolar protein sorting-associated protein 37A (VPS37A) from Homo sapiens (Human).